The sequence spans 218 residues: MANSSPVYDWFNERLEIQDIVDDISSKYVPPHVNIFYCLGGITLVCFLIQFATGFAMTFYYKPTVVEAYSSVQYLMTDVSFGWLIRSVHRWSASMMVLMLILHVFRVYLTGGFKRPRELTWVTGVTMAVITVSFGVTGYSLPWDQVGYWAVKIVSGVPAAVPVVGDFMVELLRGGESVGQSTLTRFYSLHTFVLPWLLAVFMLAHFLMIRKQGISGPL.

A helical transmembrane segment spans residues 35 to 55; it reads IFYCLGGITLVCFLIQFATGF. Residue cysteine 38 participates in heme c binding. Residues histidine 89 and histidine 103 each contribute to the heme b site. The next 3 helical transmembrane spans lie at 93–113, 119–139, and 189–209; these read ASMMVLMLILHVFRVYLTGGF, LTWVTGVTMAVITVSFGVTGY, and LHTFVLPWLLAVFMLAHFLMI. Residues histidine 190 and histidine 205 each coordinate heme b.

This sequence belongs to the cytochrome b family. PetB subfamily. In terms of assembly, the 4 large subunits of the cytochrome b6-f complex are cytochrome b6, subunit IV (17 kDa polypeptide, PetD), cytochrome f and the Rieske protein, while the 4 small subunits are PetG, PetL, PetM and PetN. The complex functions as a dimer. Requires heme b as cofactor. Heme c serves as cofactor.

The protein resides in the cellular thylakoid membrane. Functionally, component of the cytochrome b6-f complex, which mediates electron transfer between photosystem II (PSII) and photosystem I (PSI), cyclic electron flow around PSI, and state transitions. This Synechococcus sp. (strain RCC307) protein is Cytochrome b6.